We begin with the raw amino-acid sequence, 126 residues long: MADEIAKAQVAQPGGDTIFGKIIRKEIPAKIIFEDDRCLAFHDISPQAPTHFLVIPKKHISQISVADDDDESLLGHLMIVGKKCAADLGLKRGYRMVVNEGADGGQSVYHIHLHVLGGRQMNWPPG.

A2 is modified (N-acetylalanine). The HIT domain maps to 18–126; the sequence is IFGKIIRKEI…GGRQMNWPPG (109 aa). N6-acetyllysine is present on residues K21 and K30. 43–44 is an AMP binding site; it reads DI. Phosphoserine occurs at positions 45 and 72. Residues N99, 105-107, and 112-114 contribute to the AMP site; these read GQS and HLH. A Histidine triad motif motif is present at residues 110–114; the sequence is HIHLH. H112 functions as the Tele-AMP-histidine intermediate in the catalytic mechanism.

Belongs to the HINT family. Homodimer. Interacts with CDK7. Interacts with RUVBL1 and RUVBL2 and is associated with the LEF1/TCF1-CTNNB1 complex and with a KAT5 histone acetyltransferase complex. Identified in a complex with MITF and CTNNB1. Interacts with CDC34 and RBX1, and is part of a SCF (SKP2-CUL1-F-box protein) E3 ubiquitin-protein ligase complex. Interacts with SUMO1, SUMO2 and RGS17. Interacts with the Ten-1 ICD form of TENM1. Interacts with CALM1; interaction increases in the presence of calcium ions.

It is found in the cytoplasm. The protein localises to the nucleus. It catalyses the reaction adenosine 5'-phosphoramidate + H2O = AMP + NH4(+). Functionally, exhibits adenosine 5'-monophosphoramidase activity, hydrolyzing purine nucleotide phosphoramidates with a single phosphate group such as adenosine 5'monophosphoramidate (AMP-NH2) to yield AMP and NH2. Hydrolyzes adenosine 5'monophosphomorpholidate (AMP-morpholidate) and guanosine 5'monophosphomorpholidate (GMP-morpholidate). Hydrolyzes lysyl-AMP (AMP-N-epsilon-(N-alpha-acetyl lysine methyl ester)) generated by lysine tRNA ligase, as well as Met-AMP, His-AMP and Asp-AMP, lysyl-GMP (GMP-N-epsilon-(N-alpha-acetyl lysine methyl ester)) and AMP-N-alanine methyl ester. Can also convert adenosine 5'-O-phosphorothioate and guanosine 5'-O-phosphorothioate to the corresponding nucleoside 5'-O-phosphates with concomitant release of hydrogen sulfide. In addition, functions as a scaffolding protein that modulates transcriptional activation by the LEF1/TCF1-CTNNB1 complex and by the complex formed with MITF and CTNNB1. Modulates p53/TP53 levels and p53/TP53-mediated apoptosis. Modulates proteasomal degradation of target proteins by the SCF (SKP2-CUL1-F-box protein) E3 ubiquitin-protein ligase complex. Also exhibits SUMO-specific isopeptidase activity, deconjugating SUMO1 from RANGAP1 and RGS17. This is Adenosine 5'-monophosphoramidase HINT1 (Hint1) from Rattus norvegicus (Rat).